A 488-amino-acid polypeptide reads, in one-letter code: Malonate-semialdehyde dehydrogenase (488 aa).

Positions 150, 152, 176, 179, 180, 229, and 251 each coordinate NAD(+). C284 (nucleophile) is an active-site residue. E382 is a binding site for NAD(+).

This sequence belongs to the aldehyde dehydrogenase family. IolA subfamily. In terms of assembly, homotetramer.

It catalyses the reaction 3-oxopropanoate + NAD(+) + CoA + H2O = hydrogencarbonate + acetyl-CoA + NADH + H(+). It carries out the reaction 2-methyl-3-oxopropanoate + NAD(+) + CoA + H2O = propanoyl-CoA + hydrogencarbonate + NADH + H(+). It participates in polyol metabolism; myo-inositol degradation into acetyl-CoA; acetyl-CoA from myo-inositol: step 7/7. Functionally, catalyzes the oxidation of malonate semialdehyde (MSA) and methylmalonate semialdehyde (MMSA) into acetyl-CoA and propanoyl-CoA, respectively. Is involved in a myo-inositol catabolic pathway. Bicarbonate, and not CO2, is the end-product of the enzymatic reaction. This is Malonate-semialdehyde dehydrogenase from Listeria monocytogenes serotype 4a (strain HCC23).